The sequence spans 161 residues: Probable ribosome biogenesis protein RLP24 (161 aa).

This sequence belongs to the eukaryotic ribosomal protein eL24 family. Associated with nucleolar and cytoplasmic pre-60S particles. At the end of biogenesis it dissociates from cytoplasmic pre-60S particles and is likely to be exchanged for its ribosomal homolog, RPL24.

The protein localises to the nucleus. Its subcellular location is the nucleolus. In terms of biological role, involved in the biogenesis of the 60S ribosomal subunit. Ensures the docking of GTPBP4/NOG1 to pre-60S particles. The chain is Probable ribosome biogenesis protein RLP24 (rsl24d1) from Danio rerio (Zebrafish).